Reading from the N-terminus, the 431-residue chain is Protein S-Myc (431 aa).

Tyrosine 36 carries the post-translational modification Phosphotyrosine; by Tyr-kinases. In terms of domain architecture, bHLH spans 348-400 (ERRRNHNRMERQRRDIMRSSFLNLRDLVPELVHNEKAAKVVILKKATEYIHTL). Positions 400 to 421 (LQADESKLLVERKKLYERQQQL) are leucine-zipper.

As to quaternary structure, efficient DNA binding requires dimerization with another bHLH protein.

Its subcellular location is the nucleus. In terms of biological role, has apoptosis-inducing activity. This Mus musculus (Mouse) protein is Protein S-Myc (Mycs).